Reading from the N-terminus, the 231-residue chain is MDKMLLLLGVSILLSEVFAQTDLTGKVFVFPRESESDYVKLIPRLEKPLENFTLCFRTYTDLSRPHSLFSYNTKNKDNELLIYKERMGEYGLYIENLGAIVRGVEEFASPVHFCTSWESSSGIAEFWVNGIPWVKKGLKKGYTVKTQPSIILGQEQDNYGGGFDKSQSFVGEMGDLNMWDSVLTPEEIKSVYEGSWLEANILDWRTLNYEMSGYAVIRPRCVALSSYNKIS.

The signal sequence occupies residues 1–19 (MDKMLLLLGVSILLSEVFA). Positions 24-223 (TGKVFVFPRE…YAVIRPRCVA (200 aa)) constitute a Pentraxin (PTX) domain. Asn51 carries N-linked (GlcNAc...) asparagine glycosylation. An intrachain disulfide couples Cys55 to Cys114. Ca(2+)-binding residues include Asp77, Asn78, Glu155, Gln156, Asp157, and Gln167.

This sequence belongs to the pentraxin family. As to quaternary structure, homopentamer. Pentraxin (or pentaxin) have a discoid arrangement of 5 non-covalently bound subunits. The cofactor is Ca(2+).

The protein localises to the secreted. This chain is Female protein, found in Nothocricetulus migratorius (Gray dwarf hamster).